We begin with the raw amino-acid sequence, 70 residues long: DNA-directed RNA polymerase subunit omega (70 aa).

Belongs to the RNA polymerase subunit omega family. As to quaternary structure, the RNAP catalytic core consists of 2 alpha, 1 beta, 1 beta' and 1 omega subunit. When a sigma factor is associated with the core the holoenzyme is formed, which can initiate transcription.

It catalyses the reaction RNA(n) + a ribonucleoside 5'-triphosphate = RNA(n+1) + diphosphate. Functionally, promotes RNA polymerase assembly. Latches the N- and C-terminal regions of the beta' subunit thereby facilitating its interaction with the beta and alpha subunits. This Bacillus mycoides (strain KBAB4) (Bacillus weihenstephanensis) protein is DNA-directed RNA polymerase subunit omega.